Here is a 141-residue protein sequence, read N- to C-terminus: Elongation factor G, chloroplastic (141 aa).

In terms of domain architecture, tr-type G spans 12–141 (KDYRNIGIMA…VPRICFVNKM (130 aa)). Residues 21-28 (AHIDAGKT) and 85-89 (DTPGH) contribute to the GTP site.

It belongs to the TRAFAC class translation factor GTPase superfamily. Classic translation factor GTPase family. EF-G/EF-2 subfamily.

It localises to the plastid. Its subcellular location is the chloroplast. It functions in the pathway protein biosynthesis; polypeptide chain elongation. Its function is as follows. Chloroplast-localized elongation factor EF-G involved in protein synthesis in plastids. Catalyzes the GTP-dependent ribosomal translocation step during translation elongation. During this step, the ribosome changes from the pre-translocational (PRE) to the post-translocational (POST) state as the newly formed A-site-bound peptidyl-tRNA and P-site-bound deacylated tRNA move to the P and E sites, respectively. Catalyzes the coordinated movement of the two tRNA molecules, the mRNA and conformational changes in the ribosome. In Pisum sativum (Garden pea), this protein is Elongation factor G, chloroplastic (fusA).